The following is a 1266-amino-acid chain: Kinesin-like protein KIN-12G (1266 aa).

Residues 1-22 are disordered; it reads MPSDCGDDDHGGGSAPAGFELQ. A Kinesin motor domain is found at 32–369; the sequence is NVQVVIRVRP…LKFAQRAKYI (338 aa). ATP is bound at residue 113 to 120; sequence GQTGSGKT. Coiled-coil stretches lie at residues 613 to 668, 817 to 854, 1029 to 1060, and 1084 to 1120; these read MEFI…SEAV, RSEL…FKRK, ARES…AERV, and SELL…MNRH.

It belongs to the TRAFAC class myosin-kinesin ATPase superfamily. Kinesin family. KIN-12 subfamily.

The protein is Kinesin-like protein KIN-12G of Oryza sativa subsp. japonica (Rice).